The sequence spans 111 residues: Cornifelin (111 aa).

It belongs to the cornifelin family. Directly or indirectly cross-linked to CE proteins loricin and involucrin (IVL).

Its subcellular location is the cytoplasm. Functionally, part of the insoluble cornified cell envelope (CE) of stratified squamous epithelia. This Bos taurus (Bovine) protein is Cornifelin (CNFN).